The chain runs to 321 residues: Merozoite surface protein 9 (321 aa).

Over residues 58–74 (KEDNQAVDTKSMEEPKV) the composition is skewed to basic and acidic residues. 3 disordered regions span residues 58-88 (KEDN…PTED), 113-141 (NNTP…ENFD), and 263-321 (IEAE…EEKK). Positions 113 to 122 (NNTPNVVPPT) are enriched in low complexity. Positions 273–321 (KNKEEEEKEKEKEKEKEEKEKEEKEKEKEEKEKEEKEKEEKEEKEEEKK) are enriched in basic and acidic residues.

It belongs to the plasmodium ABRA family. In terms of assembly, forms a complex composed of MSP1, MSP6, MSP7, MSP9 and MSP3; within the complex, MSP6 and MSP9 mediate the binding to the host erythrocyte. Interacts with MSP1 subunits p19 and p42; the interaction is direct. Interacts with host SLC4A1/Band 3 protein (via the 5ABC region). MSP1 subunits p19 or p42, and MSP9 form a co-ligand complex that interacts with host SLC4A1/Band 3 protein. In terms of processing, not glycosylated.

It localises to the cell membrane. Its subcellular location is the parasitophorous vacuole lumen. It is found in the secreted. During the asexual blood stage, involved in the sialic acid-independent (SAID) merozoite invasion of host erythrocytes by binding to host SLC4A1/Band 3 protein on the surface of the host erythrocyte. This is Merozoite surface protein 9 from Plasmodium falciparum (isolate FC27 / Papua New Guinea).